The chain runs to 434 residues: UDP-glucose 6-dehydrogenase (434 aa).

NAD(+)-binding positions include 2–19 (NITF…GVMM), Val-11, Asp-30, Lys-35, Thr-121, and Glu-152. Substrate is bound by residues 148–152 (EFLRE), Lys-204, Asn-208, 249–253 (FLNAG), and Gly-257. Catalysis depends on Cys-260, which acts as the Nucleophile. Lys-263 provides a ligand contact to NAD(+). Lys-321 is a binding site for substrate. Arg-328 is an NAD(+) binding site.

Belongs to the UDP-glucose/GDP-mannose dehydrogenase family.

It carries out the reaction UDP-alpha-D-glucose + 2 NAD(+) + H2O = UDP-alpha-D-glucuronate + 2 NADH + 3 H(+). It participates in nucleotide-sugar biosynthesis; UDP-alpha-D-glucuronate biosynthesis; UDP-alpha-D-glucuronate from UDP-alpha-D-glucose: step 1/1. The sequence is that of UDP-glucose 6-dehydrogenase (udg) from Rickettsia bellii (strain RML369-C).